The following is a 728-amino-acid chain: Probable 3',5'-cyclic phosphodiesterase pde-5 (728 aa).

The GAF domain occupies 214-371 (SMDAVIIKVM…HHAKLYDKIR (158 aa)). Residues 390 to 709 (CNADEVNKLK…KKWEELAEEQ (320 aa)) enclose the PDEase domain. The active-site Proton donor is the His-465. 4 residues coordinate a divalent metal cation: His-469, His-503, Asp-504, and Asp-614. The stretch at 691-728 (MRERCEYNAKKWEELAEEQRKKQEALAQQNGEANETQE) forms a coiled coil. Positions 708–728 (EQRKKQEALAQQNGEANETQE) are disordered. Residues 716-728 (LAQQNGEANETQE) are compositionally biased toward polar residues.

The protein belongs to the cyclic nucleotide phosphodiesterase family. A divalent metal cation serves as cofactor.

It carries out the reaction a nucleoside 3',5'-cyclic phosphate + H2O = a nucleoside 5'-phosphate + H(+). Redundantly with pde-1, plays a role in the AFD thermosensory neurons to regulate microvilli receptive ending morphology, possibly by regulating cGMP levels. The chain is Probable 3',5'-cyclic phosphodiesterase pde-5 (pde-5) from Caenorhabditis elegans.